Consider the following 62-residue polypeptide: Conotoxin TxIC (62 aa).

The N-terminal stretch at methionine 1–alanine 22 is a signal peptide. The propeptide occupies glutamine 23–glutamine 47. 2 disulfide bridges follow: cysteine 52–cysteine 58 and cysteine 53–cysteine 61. A 4-hydroxyproline modification is found at proline 60. Cysteine 61 carries the post-translational modification Cysteine amide.

This sequence belongs to the conotoxin A superfamily. As to expression, expressed by the venom duct.

The protein localises to the secreted. The polypeptide is Conotoxin TxIC (Conus textile (Cloth-of-gold cone)).